A 229-amino-acid chain; its full sequence is Cytidylate kinase (229 aa).

12 to 20 (GPSGAGKGT) provides a ligand contact to ATP.

Belongs to the cytidylate kinase family. Type 1 subfamily.

Its subcellular location is the cytoplasm. The catalysed reaction is CMP + ATP = CDP + ADP. It carries out the reaction dCMP + ATP = dCDP + ADP. This chain is Cytidylate kinase, found in Pseudomonas aeruginosa (strain LESB58).